The sequence spans 287 residues: ATP synthase gamma chain (287 aa).

Belongs to the ATPase gamma chain family. F-type ATPases have 2 components, CF(1) - the catalytic core - and CF(0) - the membrane proton channel. CF(1) has five subunits: alpha(3), beta(3), gamma(1), delta(1), epsilon(1). CF(0) has three main subunits: a, b and c.

It localises to the cell inner membrane. Produces ATP from ADP in the presence of a proton gradient across the membrane. The gamma chain is believed to be important in regulating ATPase activity and the flow of protons through the CF(0) complex. This Photorhabdus laumondii subsp. laumondii (strain DSM 15139 / CIP 105565 / TT01) (Photorhabdus luminescens subsp. laumondii) protein is ATP synthase gamma chain.